The following is a 172-amino-acid chain: Calcium channel flower homolog (172 aa).

The Cytoplasmic segment spans residues 1–32; sequence MSSSGGAPGASASSAPPAQEEGMTWWYRWLCR. The helical transmembrane segment at 33–53 threads the bilayer; that stretch reads LSGVLGAVSCAISGLFNCITI. Over 54 to 57 the chain is Extracellular; the sequence is HPLN. A helical transmembrane segment spans residues 58–78; it reads IAAGVWMIMNAFILLLCEAPF. The Cytoplasmic portion of the chain corresponds to 79-102; it reads CCQFIEFANTVAEKVDRLRSWQKA. The chain crosses the membrane as a helical span at residues 103 to 123; sequence VFYCGMAVVPIVISLTLTTLL. Topologically, residues 124 to 125 are extracellular; that stretch reads GN. The helical transmembrane segment at 126–142 threads the bilayer; the sequence is AIAFATGVLYGLSALGK. Topologically, residues 143 to 172 are cytoplasmic; that stretch reads KGDAISYARIQQQRQQADEEKLAETLEGEL.

It belongs to the calcium channel flower family. As to quaternary structure, interacts with adaptor protein complex 2 (AP-2). As to expression, detected in skin cells at low levels of expression (at protein level).

The protein localises to the cell membrane. It localises to the cytoplasmic vesicle. It is found in the secretory vesicle. The protein resides in the synaptic vesicle. Its subcellular location is the golgi apparatus. The protein localises to the vesicle. It localises to the early endosome. It is found in the recycling endosome. The protein resides in the endoplasmic reticulum membrane. Functionally, transmembrane protein which mediates synaptic endocytosis and fitness-based cell culling. In response to different stimulus strengths, controls two major modes of synaptic vesicle (SV) retrieval in hippocampal neurons; Clathrin-mediated endocytosis (CME) in response to mild stimulation and activity-dependent bulk endocytosis (ADBE) in response to strong stimulation. In cytotoxic T-lymphoocytes (CTLs) facilitates calcium-dependent endocytosis of cytotoxic granules at the immuno synapse. Different isoforms work as fitness fingerprints in 'loser' and 'winner' cells and thereby mediate win/lose decisions as part of the cell competition process. Functions with the other flower isoforms to produce tissue-specific fitness fingerprints that identify unfit or fit cells during cell selection processes in order to maintain tissue health. During cell competition, if levels of this isoform in cells is higher than in the surrounding neighboring cells, the cells are recognized as 'winner' cells, and do not undergo elimination via apoptosis. In terms of biological role, functions with the other flower isoforms to produce tissue-specific fitness fingerprints that identify unfit or fit cells during cell selection processes in order to maintain tissue health. During cell competition, if levels of this isoform in unfit cells is higher than in the surrounding neighboring cells, the cells are recognized as 'loser' cells, and undergo elimination via apoptosis to be replaced by the surrounding healthy 'winner' cell population. The protein is Calcium channel flower homolog (CACFD1) of Homo sapiens (Human).